The chain runs to 1161 residues: Lateral signaling target protein 2 homolog (1161 aa).

Disordered regions lie at residues 417 to 510, 583 to 831, 890 to 918, 935 to 978, 992 to 1014, and 1029 to 1095; these read ATGS…EVDD, AAGS…PTQS, MNSS…HNHP, DQQN…SVES, SSPV…TGQE, and GKAS…EPPR. Over residues 419–429 the composition is skewed to gly residues; that stretch reads GSSGFGSGRGG. The segment covering 438–453 has biased composition (basic residues); the sequence is PKQRHNQAHLRQRGAP. The span at 468–487 shows a compositional bias: basic and acidic residues; sequence GDDREPVVEEDNNNHLRKEI. Acidic residues predominate over residues 488 to 510; the sequence is EEEDVDDDMEEEEEDEEEDEVDD. A compositionally biased stretch (low complexity) spans 583–601; sequence AAGSGGQQQQQQQQQLIDS. Residues 669-704 show a composition bias toward acidic residues; sequence SDYEEADVDDEPDDVDADDDDEEEDDVVGEVEEQND. The segment covering 728–742 has biased composition (basic residues); that stretch reads KAARNHRKSSHHRPR. Low complexity predominate over residues 743–757; that stretch reads PSTSSSSSSAAYRNK. Basic residues predominate over residues 758 to 773; sequence SQSHQHHHHHHHHHHH. 2 stretches are compositionally biased toward low complexity: residues 781-800 and 807-831; these read GTSS…SNGS and MQQQ…PTQS. Acidic residues predominate over residues 896–910; that stretch reads EPDEPPEPSGSEEES. Polar residues-rich tracts occupy residues 935 to 948 and 956 to 967; these read DQQN…QSIY and EQDSVFGSSGDS. Residues 996 to 1010 show a composition bias toward gly residues; sequence GAGGAGGGGMVGGSR. Residues 1054 to 1065 are compositionally biased toward low complexity; it reads SRSSPSSPVNSN. The span at 1081–1094 shows a compositional bias: basic and acidic residues; it reads TAHEQQRRMPEEPP. The segment at 1099-1159 adopts an FYVE-type zinc-finger fold; the sequence is DCDAPRCMAC…VCRDCYIHEV (61 aa). Cys-1105, Cys-1108, Cys-1121, Cys-1124, Cys-1129, Cys-1132, Cys-1151, and Cys-1154 together coordinate Zn(2+).

Belongs to the lst-2 family.

In terms of biological role, negative regulator of epidermal growth factor receptor (EGFR) signaling. This chain is Lateral signaling target protein 2 homolog, found in Anopheles gambiae (African malaria mosquito).